A 317-amino-acid polypeptide reads, in one-letter code: Methionyl-tRNA formyltransferase (317 aa).

112-115 (SLLP) lines the (6S)-5,6,7,8-tetrahydrofolate pocket.

The protein belongs to the Fmt family.

It catalyses the reaction L-methionyl-tRNA(fMet) + (6R)-10-formyltetrahydrofolate = N-formyl-L-methionyl-tRNA(fMet) + (6S)-5,6,7,8-tetrahydrofolate + H(+). Functionally, attaches a formyl group to the free amino group of methionyl-tRNA(fMet). The formyl group appears to play a dual role in the initiator identity of N-formylmethionyl-tRNA by promoting its recognition by IF2 and preventing the misappropriation of this tRNA by the elongation apparatus. The polypeptide is Methionyl-tRNA formyltransferase (Geobacter sulfurreducens (strain ATCC 51573 / DSM 12127 / PCA)).